Here is a 316-residue protein sequence, read N- to C-terminus: METWQELKVTVKREGEELVSNLLIELGAQGVAIEDSMDYVGNVDRFGEIFPEVEQQEEIVVTAYYPETVDVATVESDLQARLAELTDFMDLGEVKMGTTALAEEDWADNWKKYYEPARITHDLTIVPSWTDYEATAGEMIIKLDPGMAFGTGTHPTTKMSLFALEQVLRGGETVLDVGTGSGVLSIASSLLGAKEIFAYDLDDVAVRVAQENIELNPGMENIHVAAGDLLKGVEIEADVIVANILADILIHLIDDAYRLVKDEGYLIMSGIIKDKWDMVRESAESAGFFLETHMVQGEWNTCVFKKTKDISGVIGG.

Thr-157, Gly-178, Asp-200, and Asn-243 together coordinate S-adenosyl-L-methionine.

The protein belongs to the methyltransferase superfamily. PrmA family.

Its subcellular location is the cytoplasm. It carries out the reaction L-lysyl-[protein] + 3 S-adenosyl-L-methionine = N(6),N(6),N(6)-trimethyl-L-lysyl-[protein] + 3 S-adenosyl-L-homocysteine + 3 H(+). In terms of biological role, methylates ribosomal protein L11. This chain is Ribosomal protein L11 methyltransferase, found in Streptococcus pneumoniae (strain Hungary19A-6).